Consider the following 408-residue polypeptide: 5-hydroxytryptamine receptor 1A (408 aa).

Residues 1-32 lie on the Extracellular side of the membrane; sequence MDASNNTTSWNILQRGRMGPSWRRCPVSYQII. 2 N-linked (GlcNAc...) asparagine glycosylation sites follow: Asn5 and Asn6. The helical transmembrane segment at 33–53 threads the bilayer; the sequence is ASLFLGRSFSAGIFGNACVIA. The Cytoplasmic portion of the chain corresponds to 54–67; the sequence is AIALERSLQNVANY. A helical transmembrane segment spans residues 68 to 92; it reads LIGSLAVTDLMVSVLVLPMAAQNQV. Residues 93 to 101 are Extracellular-facing; that stretch reads LNKWTLGQV. The chain crosses the membrane as a helical span at residues 102-126; it reads TCDIFISLDVLCCTSSILHLCAIAL. Cys103 and Cys181 form a disulfide bridge. Serotonin is bound by residues Asp110 and Cys114. A DRY motif; important for ligand-induced conformation changes motif is present at residues 127–129; it reads DRY. Topologically, residues 127 to 146 are cytoplasmic; sequence DRYWAITDPIDYVNKRTPRR. A helical transmembrane segment spans residues 147–168; that stretch reads AAVLISITWIVGFSISIPPMLG. At 169 to 187 the chain is on the extracellular side; the sequence is WRTPEDRSDPNACRISEDP. Residues 188-210 traverse the membrane as a helical segment; that stretch reads GYTIYSTFGAFYIPLILMLVLYG. Topologically, residues 211–333 are cytoplasmic; that stretch reads KIFKAARFRI…LARERKTVKT (123 aa). Residues 235–255 form a disordered region; that stretch reads TCLSVSQQSPKEKQRGAQQEL. 1D-myo-inositol 4-phosphate is bound by residues Lys332, Thr333, and Gly339. The chain crosses the membrane as a helical span at residues 334 to 357; the sequence is LGIIMGTFILCWLPFFIVALVLPF. At 358–364 the chain is on the extracellular side; that stretch reads CETCHMP. Residues 365–389 traverse the membrane as a helical segment; the sequence is HLLFDIITWLGYSNSLLNPIIYAYF. The NPxxY motif; important for ligand-induced conformation changes and signaling signature appears at 382-386; it reads NPIIY. 3 residues coordinate 1D-myo-inositol 4-phosphate: Phe389, Asn390, and Lys391. Residues 390 to 408 lie on the Cytoplasmic side of the membrane; that stretch reads NKDFQSAFKKIIKCKFCRQ.

It belongs to the G-protein coupled receptor 1 family. 5-hydroxytryptamine receptor subfamily. HTR1A sub-subfamily. In terms of tissue distribution, first expressed in the rostral part of the brain stem at stage 22. At later stages of development, expression is localized to serotonergic neurons. The expression pattern changes in the tadpole of stage 41 where, in addition to serotonergic neurons, expression is also localized to the inner nuclear layer (INL) of the developing retina. This expression pattern continues through to the start of metamorphosis (stage 46). In adults, expressed in the brain, in particular the telencephalon, diencephalon and mesencephalon. In the telencephalic region, expression is localized to the lateral, dorsal and medial pallium, and in the striatum, septum and amygdala. In the mesencephalic region, expression is strongest in the optic tectum and torus semicircularis with moderate levels of expression in tegmental nuclei. In diencephalon, localized to the dorsal and ventral thalamus and the preoptic area of the hypothalamus.

The protein resides in the cell membrane. Its activity is regulated as follows. G-protein coupled receptor activity is regulated by lipids: phosphatidylinositol 4-phosphate increases HTR1A-mediated activity. Functionally, G-protein coupled receptor for 5-hydroxytryptamine (serotonin). Also functions as a receptor for various drugs and psychoactive substances. Ligand binding causes a conformation change that triggers signaling via guanine nucleotide-binding proteins (G proteins) and modulates the activity of downstream effectors, such as adenylate cyclase. HTR1A is coupled to G(i)/G(o) G alpha proteins and mediates inhibitory neurotransmission: signaling inhibits adenylate cyclase activity and activates a phosphatidylinositol-calcium second messenger system that regulates the release of Ca(2+) ions from intracellular stores. Beta-arrestin family members regulate signaling by mediating both receptor desensitization and resensitization processes. Activation of the receptor may play a role in the exit from G0 phase and in promoting DNA synthesis. This chain is 5-hydroxytryptamine receptor 1A, found in Xenopus laevis (African clawed frog).